A 183-amino-acid chain; its full sequence is Bifunctional protein PyrR (183 aa).

A PRPP-binding motif is present at residues 102–114; that stretch reads VVLVDDVLYTGRT.

The protein belongs to the purine/pyrimidine phosphoribosyltransferase family. PyrR subfamily. As to quaternary structure, homodimer and homohexamer; in equilibrium.

The catalysed reaction is UMP + diphosphate = 5-phospho-alpha-D-ribose 1-diphosphate + uracil. In terms of biological role, regulates transcriptional attenuation of the pyrimidine nucleotide (pyr) operon by binding in a uridine-dependent manner to specific sites on pyr mRNA. This disrupts an antiterminator hairpin in the RNA and favors formation of a downstream transcription terminator, leading to a reduced expression of downstream genes. Functionally, also displays a weak uracil phosphoribosyltransferase activity which is not physiologically significant. In Listeria welshimeri serovar 6b (strain ATCC 35897 / DSM 20650 / CCUG 15529 / CIP 8149 / NCTC 11857 / SLCC 5334 / V8), this protein is Bifunctional protein PyrR.